Consider the following 570-residue polypeptide: MIPPEIRRSVLLQKAIKLALAGTLLTFASFSATAADPSSDTETPQPPDILLGALFNDVQNAKLFPDQKTFADAIPNSDPLMILADYRMQRNQSGFDLRHFVDVNFTLPKAGEKYVPPAGQSLREHIDGLWPVLTRSTKNVKKWDSLLPLPESYVVPGGRFREIYYWDSYFTMLGLAESGHWDKVADMVANFGYEIDAWGHIPNGNRTYYLSHSQPPFFAFMVELLAQHEGDDALKEYLPQLQKEYAYWMEGVETLQPGQQNQRVVKLEDGSVLNRYWDDRDTPRPESWVEDIATAKSNPNRPATEIYRDLRSAAASGWDFSSRWMDNPQQLSTIRTTTIVPVDLNALLYQLEKTLARASAAAGDRAKASQYDALANARQKAIEMHLWNNKEGWYADYDLQNNKIRDQLTAAALFPLYVNAAAKDRAAKVAAAAQAHLLQPGGLATTSVKSGQQWDAPNGWAPLQWVAAEGLQNYGQDDVAMEVTWRFLTNVQHTYDREKKLVEKYDVSSTGTGGGGGEYPLQDGFGWTNGVTLKMLDLICPQEKPCDSVPSTRPASLSATPTKTPSAATQ.

The first 34 residues, Met-1–Ala-34, serve as a signal peptide directing secretion. Substrate contacts are provided by residues Arg-159, Trp-166–Asp-167, Asn-203, His-212–Gln-214, Arg-284–Glu-286, and Gly-317. Catalysis depends on proton donor/acceptor residues Asp-319 and Glu-503. Glu-518 contributes to the substrate binding site. Positions Lys-544–Gln-570 are disordered. Over residues Pro-554–Gln-570 the composition is skewed to low complexity.

Belongs to the glycosyl hydrolase 37 family. As to quaternary structure, monomer.

The protein localises to the periplasm. The enzyme catalyses alpha,alpha-trehalose + H2O = alpha-D-glucose + beta-D-glucose. In terms of biological role, provides the cells with the ability to utilize trehalose at high osmolarity by splitting it into glucose molecules that can subsequently be taken up by the phosphotransferase-mediated uptake system. In Salmonella paratyphi C (strain RKS4594), this protein is Periplasmic trehalase.